The following is a 449-amino-acid chain: Hyaluronidase-2 (449 aa).

The signal sequence occupies residues 1–23 (MYHLWIKCLAAWIFLKRCNGVHA). 2 cysteine pairs are disulfide-bonded: Cys-47–Cys-340 and Cys-211–Cys-227. N-linked (GlcNAc...) asparagine glycosylation is found at Asn-67, Asn-103, and Asn-111. The active-site Proton donor is Glu-135. A glycan (N-linked (GlcNAc...) asparagine) is linked at Asn-153. The N-linked (GlcNAc...) asparagine glycan is linked to Asn-357. Cystine bridges form between Cys-365/Cys-376, Cys-370/Cys-427, and Cys-429/Cys-438. Asn-401 carries N-linked (GlcNAc...) asparagine glycosylation. The region spanning 427–438 (CQCYQGWKGLYC) is the EGF-like domain.

This sequence belongs to the glycosyl hydrolase 56 family. In terms of assembly, monomer. Expressed by the venom gland.

The protein resides in the secreted. It catalyses the reaction Random hydrolysis of (1-&gt;4)-linkages between N-acetyl-beta-D-glucosamine and D-glucuronate residues in hyaluronate.. Snake venom endo-hyaluronidase that degrades hyaluronan to smaller oligosaccharide fragments. In venom, it is not toxic by itself, but increases the diffusion of other venom proteins by degrading the extracellular matrix. In addition, it displays antiedematogenic activity. This Bitis arietans (African puff adder) protein is Hyaluronidase-2.